Reading from the N-terminus, the 87-residue chain is DNA-directed RNA polymerase subunit omega (87 aa).

The protein belongs to the RNA polymerase subunit omega family. The RNAP catalytic core consists of 2 alpha, 1 beta, 1 beta' and 1 omega subunit. When a sigma factor is associated with the core the holoenzyme is formed, which can initiate transcription.

The enzyme catalyses RNA(n) + a ribonucleoside 5'-triphosphate = RNA(n+1) + diphosphate. In terms of biological role, promotes RNA polymerase assembly. Latches the N- and C-terminal regions of the beta' subunit thereby facilitating its interaction with the beta and alpha subunits. In Ectopseudomonas mendocina (strain ymp) (Pseudomonas mendocina), this protein is DNA-directed RNA polymerase subunit omega.